The following is a 317-amino-acid chain: uncharacterized protein (317 aa).

A compositionally biased stretch (basic and acidic residues) spans 1 to 11 (MASAGAERRPG). The interval 1–164 (MASAGAERRP…KAKKRKSLGA (164 aa)) is disordered. The span at 19-34 (GQGQLTEEPGSAQTSE) shows a compositional bias: polar residues. Basic and acidic residues-rich tracts occupy residues 47-58 (HEARGTQSEDQR) and 71-92 (EGPK…ERGP). 2 stretches are compositionally biased toward basic residues: residues 100–110 (RPRHGPKRKPV) and 151–161 (KQHKKAKKRKS).

This is an uncharacterized protein from Homo sapiens (Human).